Reading from the N-terminus, the 225-residue chain is ATP-dependent Clp protease proteolytic subunit (225 aa).

The active-site Nucleophile is serine 123. The active site involves histidine 148.

This sequence belongs to the peptidase S14 family. In terms of assembly, fourteen ClpP subunits assemble into 2 heptameric rings which stack back to back to give a disk-like structure with a central cavity, resembling the structure of eukaryotic proteasomes.

It localises to the cytoplasm. The enzyme catalyses Hydrolysis of proteins to small peptides in the presence of ATP and magnesium. alpha-casein is the usual test substrate. In the absence of ATP, only oligopeptides shorter than five residues are hydrolyzed (such as succinyl-Leu-Tyr-|-NHMec, and Leu-Tyr-Leu-|-Tyr-Trp, in which cleavage of the -Tyr-|-Leu- and -Tyr-|-Trp bonds also occurs).. Its function is as follows. Cleaves peptides in various proteins in a process that requires ATP hydrolysis. Has a chymotrypsin-like activity. Plays a major role in the degradation of misfolded proteins. This Chlorobium luteolum (strain DSM 273 / BCRC 81028 / 2530) (Pelodictyon luteolum) protein is ATP-dependent Clp protease proteolytic subunit.